A 353-amino-acid chain; its full sequence is Carbamoyl phosphate synthase small chain (353 aa).

The segment at 1–166 (MSDAYLALET…AETHGNGDTT (166 aa)) is CPSase. L-glutamine-binding residues include serine 45, glycine 214, and glycine 216. Residues 166 to 349 (TVALVDCGAK…LAMADASYTP (184 aa)) form the Glutamine amidotransferase type-1 domain. Cysteine 241 (nucleophile) is an active-site residue. L-glutamine contacts are provided by leucine 242, glutamine 245, asparagine 283, glycine 285, and tyrosine 286. Residues histidine 322 and glutamate 324 contribute to the active site.

The protein belongs to the CarA family. Composed of two chains; the small (or glutamine) chain promotes the hydrolysis of glutamine to ammonia, which is used by the large (or ammonia) chain to synthesize carbamoyl phosphate. Tetramer of heterodimers (alpha,beta)4.

It carries out the reaction hydrogencarbonate + L-glutamine + 2 ATP + H2O = carbamoyl phosphate + L-glutamate + 2 ADP + phosphate + 2 H(+). It catalyses the reaction L-glutamine + H2O = L-glutamate + NH4(+). It functions in the pathway amino-acid biosynthesis; L-arginine biosynthesis; carbamoyl phosphate from bicarbonate: step 1/1. The protein operates within pyrimidine metabolism; UMP biosynthesis via de novo pathway; (S)-dihydroorotate from bicarbonate: step 1/3. In terms of biological role, small subunit of the glutamine-dependent carbamoyl phosphate synthetase (CPSase). CPSase catalyzes the formation of carbamoyl phosphate from the ammonia moiety of glutamine, carbonate, and phosphate donated by ATP, constituting the first step of 2 biosynthetic pathways, one leading to arginine and/or urea and the other to pyrimidine nucleotides. The small subunit (glutamine amidotransferase) binds and cleaves glutamine to supply the large subunit with the substrate ammonia. This chain is Carbamoyl phosphate synthase small chain, found in Halobacterium salinarum (strain ATCC 29341 / DSM 671 / R1).